The chain runs to 430 residues: tRNA(Ile)-lysidine synthase (430 aa).

21–26 is a binding site for ATP; the sequence is SGGLDS.

This sequence belongs to the tRNA(Ile)-lysidine synthase family.

Its subcellular location is the cytoplasm. It carries out the reaction cytidine(34) in tRNA(Ile2) + L-lysine + ATP = lysidine(34) in tRNA(Ile2) + AMP + diphosphate + H(+). In terms of biological role, ligates lysine onto the cytidine present at position 34 of the AUA codon-specific tRNA(Ile) that contains the anticodon CAU, in an ATP-dependent manner. Cytidine is converted to lysidine, thus changing the amino acid specificity of the tRNA from methionine to isoleucine. This Salmonella newport (strain SL254) protein is tRNA(Ile)-lysidine synthase.